The chain runs to 349 residues: CCN family member 2 (349 aa).

Positions 1–26 (MSATGLGPVRCAFVLLLALCSRPASS) are cleaved as a signal peptide. The IGFBP N-terminal domain occupies 27-98 (QDCSAPCQCP…NRKIGVCTAK (72 aa)). 6 cysteine pairs are disulfide-bonded: Cys-29–Cys-54, Cys-33–Cys-56, Cys-35–Cys-57, Cys-43–Cys-60, Cys-68–Cys-82, and Cys-74–Cys-95. Residues 101–167 (APCVFGGTVY…GKCCEEWVCD (67 aa)) form the VWFC domain. Positions 198-243 (NCLVQTTEWSACSKTCGMGISTRVTNDNAFCRLEKQSRLCMVRPCE) constitute a TSP type-1 domain. Residues 247–349 (EENIKKGKKC…YYRKMYGDMA (103 aa)) form a heparin-binding region. 5 disulfides stabilise this stretch: Cys-256-Cys-293, Cys-273-Cys-307, Cys-284-Cys-323, Cys-287-Cys-325, and Cys-292-Cys-329. The region spanning 256 to 330 (CIRTPKISKP…KTCACHYNCP (75 aa)) is the CTCK domain.

Belongs to the CCN family. In terms of assembly, monomer. Interacts with TSKU.

The protein resides in the secreted. Its subcellular location is the extracellular space. The protein localises to the extracellular matrix. Its function is as follows. Major connective tissue mitoattractant secreted by vascular endothelial cells. Promotes proliferation and differentiation of chondrocytes. Is involved in the stimulation of osteoblast differentiation and has a critical role in osteogenesis. Mediates heparin- and divalent cation-dependent cell adhesion in many cell types including fibroblasts, myofibroblasts, endothelial and epithelial cells. Enhances fibroblast growth factor-induced DNA synthesis. This is CCN family member 2 (CCN2) from Bos taurus (Bovine).